We begin with the raw amino-acid sequence, 169 residues long: Peptide deformylase (169 aa).

2 residues coordinate Fe cation: cysteine 92 and histidine 134. Glutamate 135 is a catalytic residue. Histidine 138 serves as a coordination point for Fe cation.

This sequence belongs to the polypeptide deformylase family. Fe(2+) serves as cofactor.

It catalyses the reaction N-terminal N-formyl-L-methionyl-[peptide] + H2O = N-terminal L-methionyl-[peptide] + formate. Removes the formyl group from the N-terminal Met of newly synthesized proteins. Requires at least a dipeptide for an efficient rate of reaction. N-terminal L-methionine is a prerequisite for activity but the enzyme has broad specificity at other positions. This chain is Peptide deformylase, found in Cellvibrio japonicus (strain Ueda107) (Pseudomonas fluorescens subsp. cellulosa).